Reading from the N-terminus, the 232-residue chain is Small ribosomal subunit protein uS3 (232 aa).

The KH type-2 domain occupies 39-107 (VRQYLTKELK…PAQINIAEVR (69 aa)).

This sequence belongs to the universal ribosomal protein uS3 family. In terms of assembly, part of the 30S ribosomal subunit. Forms a tight complex with proteins S10 and S14.

Functionally, binds the lower part of the 30S subunit head. Binds mRNA in the 70S ribosome, positioning it for translation. The chain is Small ribosomal subunit protein uS3 from Aliivibrio salmonicida (strain LFI1238) (Vibrio salmonicida (strain LFI1238)).